Consider the following 210-residue polypeptide: Large ribosomal subunit protein uL4 (210 aa).

Polar residues predominate over residues 44–54; the sequence is KRQGTASTLTR. Residues 44 to 85 form a disordered region; sequence KRQGTASTLTRSEVRGGGRKPYKQKGTGRARQGSIRTPLRPG. Basic residues predominate over residues 60 to 71; the sequence is GGRKPYKQKGTG.

Belongs to the universal ribosomal protein uL4 family. As to quaternary structure, part of the 50S ribosomal subunit.

In terms of biological role, one of the primary rRNA binding proteins, this protein initially binds near the 5'-end of the 23S rRNA. It is important during the early stages of 50S assembly. It makes multiple contacts with different domains of the 23S rRNA in the assembled 50S subunit and ribosome. Its function is as follows. Forms part of the polypeptide exit tunnel. This chain is Large ribosomal subunit protein uL4, found in Prochlorococcus marinus (strain MIT 9301).